The sequence spans 90 residues: Elongation factor 1-beta (90 aa).

The protein belongs to the EF-1-beta/EF-1-delta family.

Promotes the exchange of GDP for GTP in EF-1-alpha/GDP, thus allowing the regeneration of EF-1-alpha/GTP that could then be used to form the ternary complex EF-1-alpha/GTP/AAtRNA. This chain is Elongation factor 1-beta, found in Desulfurococcus amylolyticus (strain DSM 18924 / JCM 16383 / VKM B-2413 / 1221n) (Desulfurococcus kamchatkensis).